Consider the following 293-residue polypeptide: Proline iminopeptidase (293 aa).

Residues 28–277 enclose the AB hydrolase-1 domain; the sequence is PLVLLHGGPG…NCSHMSFVQK (250 aa). Serine 105 serves as the catalytic Nucleophile. Aspartate 244 is a catalytic residue. Histidine 271 functions as the Proton donor in the catalytic mechanism.

The protein belongs to the peptidase S33 family.

The protein localises to the cell envelope. It carries out the reaction Release of N-terminal proline from a peptide.. In terms of biological role, releases the N-terminal proline from various substrates. The chain is Proline iminopeptidase from Lactobacillus acidophilus (strain ATCC 700396 / NCK56 / N2 / NCFM).